The following is a 752-amino-acid chain: Probable beta-glucosidase D (752 aa).

A signal peptide spans 1–18 (MRFVSLAVGAALLGAAGA). 2 N-linked (GlcNAc...) asparagine glycosylation sites follow: asparagine 187 and asparagine 237. The active site involves aspartate 265. N-linked (GlcNAc...) asparagine glycans are attached at residues asparagine 299, asparagine 343, asparagine 441, asparagine 510, asparagine 532, asparagine 571, asparagine 586, asparagine 638, asparagine 661, and asparagine 743.

This sequence belongs to the glycosyl hydrolase 3 family.

The protein localises to the secreted. The catalysed reaction is Hydrolysis of terminal, non-reducing beta-D-glucosyl residues with release of beta-D-glucose.. The protein operates within glycan metabolism; cellulose degradation. Its function is as follows. Beta-glucosidases are one of a number of cellulolytic enzymes involved in the degradation of cellulosic biomass. Catalyzes the last step releasing glucose from the inhibitory cellobiose. The polypeptide is Probable beta-glucosidase D (bglD) (Aspergillus oryzae (strain ATCC 42149 / RIB 40) (Yellow koji mold)).